The chain runs to 45 residues: Myotoxin-2 (45 aa).

3 disulfides stabilise this stretch: cysteine 4–cysteine 36, cysteine 11–cysteine 30, and cysteine 18–cysteine 37.

Belongs to the crotamine-myotoxin family. Monomer. In terms of tissue distribution, expressed by the venom gland.

The protein localises to the secreted. In terms of biological role, cationic peptide that possesses multiple functions. It acts as a cell-penetrating peptide (CPP), and as a potent voltage-gated potassium channel (Kv) inhibitor. It exhibits antimicrobial activities, hind limb paralysis, and severe muscle necrosis by a non-enzymatic mechanism. The chain is Myotoxin-2 from Crotalus viridis viridis (Prairie rattlesnake).